The chain runs to 422 residues: Putative acid phosphatase 5 (422 aa).

The signal sequence occupies residues 1-13; sequence MLLLLVLLIGASG. H40 functions as the Nucleophile in the catalytic mechanism. 3 N-linked (GlcNAc...) asparagine glycosylation sites follow: N104, N210, and N218. Disulfide bonds link C152–C363, C205–C302, and C338–C342. Catalysis depends on D279, which acts as the Proton donor. 2 N-linked (GlcNAc...) asparagine glycosylation sites follow: N312 and N323.

It belongs to the histidine acid phosphatase family.

The catalysed reaction is a phosphate monoester + H2O = an alcohol + phosphate. This is Putative acid phosphatase 5 (pho-5) from Caenorhabditis elegans.